Consider the following 124-residue polypeptide: Small ribosomal subunit protein bS6 (124 aa).

The disordered stretch occupies residues 98–124 (EASPMLKAREERPRREDVREEAEEAAE). Basic and acidic residues predominate over residues 104–115 (KAREERPRREDV).

Belongs to the bacterial ribosomal protein bS6 family.

Binds together with bS18 to 16S ribosomal RNA. The polypeptide is Small ribosomal subunit protein bS6 (Tolumonas auensis (strain DSM 9187 / NBRC 110442 / TA 4)).